The following is a 512-amino-acid chain: Inosine-5'-monophosphate dehydrogenase (512 aa).

CBS domains are found at residues 110-169 (FIMK…SAPV) and 173-231 (MTRR…PNSS). NAD(+) contacts are provided by residues 268–270 (DSS) and 318–320 (GMG). The K(+) site is built by glycine 320 and glycine 322. Position 323 (serine 323) interacts with IMP. Cysteine 325 is a K(+) binding site. Cysteine 325 serves as the catalytic Thioimidate intermediate. IMP is bound by residues 358 to 360 (DGG), 381 to 382 (GS), and 405 to 409 (YRGMG). Arginine 423 serves as the catalytic Proton acceptor. Position 435 (glutamine 435) interacts with IMP. Residues glutamate 494 and glycine 495 each coordinate K(+). A Microbody targeting signal motif is present at residues 510 to 512 (SKL).

It belongs to the IMPDH/GMPR family. As to quaternary structure, homotetramer. K(+) is required as a cofactor.

It localises to the glycosome. It carries out the reaction IMP + NAD(+) + H2O = XMP + NADH + H(+). It functions in the pathway purine metabolism; XMP biosynthesis via de novo pathway; XMP from IMP: step 1/1. With respect to regulation, mycophenolic acid (MPA) is a non-competitive inhibitor that prevents formation of the closed enzyme conformation by binding to the same site as the amobile flap. In contrast, mizoribine monophosphate (MZP) is a competitive inhibitor that induces the closed conformation. MPA is a potent inhibitor of mammalian IMPDHs but a poor inhibitor of the bacterial enzymes. MZP is a more potent inhibitor of bacterial IMPDH. In terms of biological role, catalyzes the conversion of inosine 5'-phosphate (IMP) to xanthosine 5'-phosphate (XMP), the first committed and rate-limiting step in the de novo synthesis of guanine nucleotides, and therefore plays an important role in the regulation of cell growth. In Trypanosoma brucei brucei, this protein is Inosine-5'-monophosphate dehydrogenase.